Reading from the N-terminus, the 710-residue chain is Zinc finger and BTB domain-containing protein 24 (710 aa).

A BTB domain is found at 37 to 103; that stretch reads CDITLIVENV…IYTGYLHASE (67 aa). Disordered stretches follow at residues 134–176 and 202–256; these read APKP…EGRS and EEDS…SRRR. Positions 159-171 form a DNA-binding region, a.T hook; the sequence is KRKRGRPRKANGL. Basic and acidic residues-rich tracts occupy residues 202-219 and 231-244; these read EEDS…KESE and PAEK…KAGD. 8 consecutive C2H2-type zinc fingers follow at residues 293 to 315, 321 to 343, 349 to 371, 377 to 399, 405 to 427, 433 to 455, 461 to 483, and 489 to 511; these read ARCK…QRRH, FKCN…TRMH, YTCT…MSLH, FTCD…YRVH, PECS…LRTH, FTCE…IRIH, YSCS…CILH, and FSCP…LKIH. Residues 651 to 676 are disordered; that stretch reads EQTTSSVPAADTGARATPVPSTRPGA.

The protein belongs to the krueppel C2H2-type zinc-finger protein family. As to quaternary structure, interacts with MN1. As to expression, widely expressed. Highest level in liver, testis and kidney.

Its subcellular location is the nucleus. Functionally, may be involved in BMP2-induced transcription. This is Zinc finger and BTB domain-containing protein 24 (Zbtb24) from Mus musculus (Mouse).